We begin with the raw amino-acid sequence, 106 residues long: Replication restart protein PriB (106 aa).

One can recognise an SSB domain in the interval Thr4–Asp103.

Belongs to the PriB family. Homodimer. Interacts with PriA and DnaT. Component of the replication restart primosome. Primosome assembly occurs via a 'hand-off' mechanism. PriA binds to replication forks, subsequently PriB then DnaT bind; DnaT then displaces ssDNA to generate the helicase loading substrate.

Functionally, involved in the restart of stalled replication forks, which reloads the replicative helicase on sites other than the origin of replication; the PriA-PriB pathway is the major replication restart pathway. During primosome assembly it facilitates complex formation between PriA and DnaT on DNA; stabilizes PriA on DNA. Stimulates the DNA unwinding activity of PriA helicase. This is Replication restart protein PriB from Yersinia enterocolitica serotype O:8 / biotype 1B (strain NCTC 13174 / 8081).